The primary structure comprises 80 residues: ASPINSHFTPYANYMPGYEDDVIMAAGTFIQGASIELSADGPIRPPYVAYVQGGLTYSHVKIAICSAIDALIEKELLTIS.

The protein to B.cereus similar ORF in glnR 5'region.

This is an uncharacterized protein from Bacillus cereus.